The primary structure comprises 626 residues: Trehalase (626 aa).

The signal sequence occupies residues 1-35 (MASSCSIRCGSRNILVNAAATFLALLVVLRCFANA). Residues 36–595 (EKPSPCQSDV…STPQPVVVST (560 aa)) lie on the Extracellular side of the membrane. A glycan (N-linked (GlcNAc...) asparagine) is linked at asparagine 104. Substrate-binding positions include arginine 181, 188 to 189 (WD), asparagine 225, and 234 to 236 (RSQ). Residue asparagine 274 is glycosylated (N-linked (GlcNAc...) asparagine). Substrate is bound by residues 299–301 (RPE) and glycine 333. Aspartate 335 (proton donor/acceptor) is an active-site residue. Residues asparagine 350, asparagine 384, asparagine 498, and asparagine 525 are each glycosylated (N-linked (GlcNAc...) asparagine). Glutamate 532 functions as the Proton donor/acceptor in the catalytic mechanism. Glutamate 547 lines the substrate pocket. The helical transmembrane segment at 596-616 (AGQVMTGILALVISLAAGFIG) threads the bilayer. The Cytoplasmic portion of the chain corresponds to 617–626 (KMRCANNAAQ).

Belongs to the glycosyl hydrolase 37 family. In terms of assembly, monomer. Post-translationally, glycosylated; contains 3.1% carbohydrates.

It localises to the membrane. The enzyme catalyses alpha,alpha-trehalose + H2O = alpha-D-glucose + beta-D-glucose. Its activity is regulated as follows. Inhibited by sodium, potassium and ammonium ions, and by TEMED. The protein is Trehalase of Apis mellifera (Honeybee).